Here is a 418-residue protein sequence, read N- to C-terminus: STE20-related kinase adapter protein beta (418 aa).

One can recognise a Protein kinase domain in the interval 58–369 (YELQVEIGRG…ASSLLSHVFF (312 aa)). Residues 64–72 (IGRGFDNLT) and Lys89 each bind ATP.

The protein belongs to the protein kinase superfamily. STE Ser/Thr protein kinase family. STE20 subfamily. As to quaternary structure, component of a trimeric complex composed of STK11/LKB1, STRAD (STRADA or STRADB) and CAB39/MO25 (CAB39/MO25alpha or CAB39L/MO25beta): the complex tethers STK11/LKB1 in the cytoplasm and stimulates its catalytic activity. Interacts with BIRC4/XIAP. These two proteins are likely to coexist in a complex with TAK1, TRAF6, TAB1 and TAB2. In terms of tissue distribution, highly expressed in heart, skeletal muscle, testis, liver and colon.

It is found in the nucleus. Its subcellular location is the cytoplasm. Its function is as follows. Pseudokinase which, in complex with CAB39/MO25 (CAB39/MO25alpha or CAB39L/MO25beta), binds to and activates STK11/LKB1. Adopts a closed conformation typical of active protein kinases and binds STK11/LKB1 as a pseudosubstrate, promoting conformational change of STK11/LKB1 in an active conformation. The polypeptide is STE20-related kinase adapter protein beta (STRADB) (Homo sapiens (Human)).